We begin with the raw amino-acid sequence, 35 residues long: Protein YbgU (35 aa).

The polypeptide is Protein YbgU (Escherichia coli (strain K12)).